We begin with the raw amino-acid sequence, 96 residues long: Large ribosomal subunit protein bL21 (96 aa).

Residues 73–84 are compositionally biased toward basic residues; the sequence is KRRKRYQSRNGH. The disordered stretch occupies residues 73 to 96; it reads KRRKRYQSRNGHRQQMTQIEVVSL. Polar residues predominate over residues 85–96; the sequence is RQQMTQIEVVSL.

It belongs to the bacterial ribosomal protein bL21 family. Part of the 50S ribosomal subunit. Contacts protein L20.

Functionally, this protein binds to 23S rRNA in the presence of protein L20. The sequence is that of Large ribosomal subunit protein bL21 from Chlorobium luteolum (strain DSM 273 / BCRC 81028 / 2530) (Pelodictyon luteolum).